We begin with the raw amino-acid sequence, 213 residues long: ATP phosphoribosyltransferase (213 aa).

This sequence belongs to the ATP phosphoribosyltransferase family. Short subfamily. In terms of assembly, heteromultimer composed of HisG and HisZ subunits.

The protein resides in the cytoplasm. It carries out the reaction 1-(5-phospho-beta-D-ribosyl)-ATP + diphosphate = 5-phospho-alpha-D-ribose 1-diphosphate + ATP. The protein operates within amino-acid biosynthesis; L-histidine biosynthesis; L-histidine from 5-phospho-alpha-D-ribose 1-diphosphate: step 1/9. In terms of biological role, catalyzes the condensation of ATP and 5-phosphoribose 1-diphosphate to form N'-(5'-phosphoribosyl)-ATP (PR-ATP). Has a crucial role in the pathway because the rate of histidine biosynthesis seems to be controlled primarily by regulation of HisG enzymatic activity. The protein is ATP phosphoribosyltransferase of Saccharophagus degradans (strain 2-40 / ATCC 43961 / DSM 17024).